The chain runs to 322 residues: 4-diphosphocytidyl-2-C-methyl-D-erythritol kinase (322 aa).

Lys18 is an active-site residue. Residue 130 to 140 (PMGAGLGGGSS) participates in ATP binding. Asp172 is an active-site residue.

It belongs to the GHMP kinase family. IspE subfamily.

The catalysed reaction is 4-CDP-2-C-methyl-D-erythritol + ATP = 4-CDP-2-C-methyl-D-erythritol 2-phosphate + ADP + H(+). It functions in the pathway isoprenoid biosynthesis; isopentenyl diphosphate biosynthesis via DXP pathway; isopentenyl diphosphate from 1-deoxy-D-xylulose 5-phosphate: step 3/6. Catalyzes the phosphorylation of the position 2 hydroxy group of 4-diphosphocytidyl-2C-methyl-D-erythritol. This is 4-diphosphocytidyl-2-C-methyl-D-erythritol kinase from Psychrobacter arcticus (strain DSM 17307 / VKM B-2377 / 273-4).